The following is a 130-amino-acid chain: Phosphoribosyl-AMP cyclohydrolase (130 aa).

D77 contacts Mg(2+). Position 78 (C78) interacts with Zn(2+). The Mg(2+) site is built by D79 and D81. The Zn(2+) site is built by C95 and C102.

Belongs to the PRA-CH family. As to quaternary structure, homodimer. Requires Mg(2+) as cofactor. Zn(2+) serves as cofactor.

It is found in the cytoplasm. The enzyme catalyses 1-(5-phospho-beta-D-ribosyl)-5'-AMP + H2O = 1-(5-phospho-beta-D-ribosyl)-5-[(5-phospho-beta-D-ribosylamino)methylideneamino]imidazole-4-carboxamide. It participates in amino-acid biosynthesis; L-histidine biosynthesis; L-histidine from 5-phospho-alpha-D-ribose 1-diphosphate: step 3/9. Catalyzes the hydrolysis of the adenine ring of phosphoribosyl-AMP. This is Phosphoribosyl-AMP cyclohydrolase from Pseudomonas entomophila (strain L48).